Here is a 91-residue protein sequence, read N- to C-terminus: UPF0250 protein NMC1112 (91 aa).

Belongs to the UPF0250 family.

In Neisseria meningitidis serogroup C / serotype 2a (strain ATCC 700532 / DSM 15464 / FAM18), this protein is UPF0250 protein NMC1112.